A 132-amino-acid polypeptide reads, in one-letter code: Inactive D-aminoacyl-tRNA deacylase (132 aa).

It belongs to the DTD family.

A non-functional D-aminoacyl-tRNA deacylase. The chain is Inactive D-aminoacyl-tRNA deacylase from Bacillus subtilis (strain 168).